We begin with the raw amino-acid sequence, 451 residues long: MYTSIYITDSKKNLVFEYLLTSQAPTFQQLCSKIAGRDAAMDAMVAISKDMSLYRQAVGPEKLWYWALCQACGDPLEPQMFLAQYHQVLIEYFDKEALTVKKLVNNADRLALLLHAMLDAGEVAVTDSNRLRQLVPLRNDLSTILNSATKTLANTVKYADSKQLFGAPVATGKVEAGQTVPWRTADCRYVNNEIYVDLVETVNATLRQKGSSLTLINGSLSGKIDVKCYLSGNPTVQLKLRTSGHPLDNSALHRCVELGEAGVATMNFVPPDGRFTLAEYAIDLSAISQAARRLTNLGLVTVSLASGLGQHRDEFEIKVIIGNSTQVAAIEDLRITVYFPDISDAAKIKILRTTHGGWESDLSRVRGVWAFDKQTAVGSVPVLRGCVENPESTPHAPPVFPSHLAVSYSHVGQLPSGIRVDTIALSDLPPGSKPFKGVKYTSRAGDYIVRA.

Residues 191-450 enclose the MHD domain; it reads NNEIYVDLVE…TSRAGDYIVR (260 aa).

Belongs to the adaptor complexes medium subunit family. In terms of assembly, adaptor protein complex 3 (AP-3) is a heterotetramer composed of 2 large adaptins (APL5 and APL6), a medium adaptin (APM3) and a small adaptin (APS3).

It localises to the golgi apparatus. Its subcellular location is the cytoplasmic vesicle membrane. In terms of biological role, part of the AP-3 complex, an adaptor-related complex which is not clathrin-associated. The complex is associated with the Golgi region as well as more peripheral structures. It facilitates the budding of vesicles from the Golgi membrane and may be directly involved in trafficking to the vacuole. This Eremothecium gossypii (strain ATCC 10895 / CBS 109.51 / FGSC 9923 / NRRL Y-1056) (Yeast) protein is AP-3 complex subunit mu (APM3).